Here is a 177-residue protein sequence, read N- to C-terminus: ATP synthase subunit delta (177 aa).

This sequence belongs to the ATPase delta chain family. In terms of assembly, F-type ATPases have 2 components, F(1) - the catalytic core - and F(0) - the membrane proton channel. F(1) has five subunits: alpha(3), beta(3), gamma(1), delta(1), epsilon(1). F(0) has three main subunits: a(1), b(2) and c(10-14). The alpha and beta chains form an alternating ring which encloses part of the gamma chain. F(1) is attached to F(0) by a central stalk formed by the gamma and epsilon chains, while a peripheral stalk is formed by the delta and b chains.

It localises to the cell inner membrane. In terms of biological role, f(1)F(0) ATP synthase produces ATP from ADP in the presence of a proton or sodium gradient. F-type ATPases consist of two structural domains, F(1) containing the extramembraneous catalytic core and F(0) containing the membrane proton channel, linked together by a central stalk and a peripheral stalk. During catalysis, ATP synthesis in the catalytic domain of F(1) is coupled via a rotary mechanism of the central stalk subunits to proton translocation. Its function is as follows. This protein is part of the stalk that links CF(0) to CF(1). It either transmits conformational changes from CF(0) to CF(1) or is implicated in proton conduction. The sequence is that of ATP synthase subunit delta from Citrobacter koseri (strain ATCC BAA-895 / CDC 4225-83 / SGSC4696).